The following is a 272-amino-acid chain: Shikimate dehydrogenase (NADP(+)) (272 aa).

Shikimate-binding positions include 14 to 16 and threonine 61; that span reads SKS. Catalysis depends on lysine 65, which acts as the Proton acceptor. Glutamate 77 is a binding site for NADP(+). Positions 86 and 102 each coordinate shikimate. NADP(+) contacts are provided by residues 126–130, 149–154, and methionine 213; these read GAGGA and NRTASR. Shikimate is bound at residue tyrosine 215. Glycine 237 serves as a coordination point for NADP(+).

Belongs to the shikimate dehydrogenase family. Homodimer.

It carries out the reaction shikimate + NADP(+) = 3-dehydroshikimate + NADPH + H(+). The protein operates within metabolic intermediate biosynthesis; chorismate biosynthesis; chorismate from D-erythrose 4-phosphate and phosphoenolpyruvate: step 4/7. Involved in the biosynthesis of the chorismate, which leads to the biosynthesis of aromatic amino acids. Catalyzes the reversible NADPH linked reduction of 3-dehydroshikimate (DHSA) to yield shikimate (SA). The sequence is that of Shikimate dehydrogenase (NADP(+)) from Salmonella paratyphi A (strain ATCC 9150 / SARB42).